The following is a 542-amino-acid chain: Probable spastin homolog spas-1 (542 aa).

Positions 29 to 66 (RAAIEMDELTKQNGTINEKLQTAELYKQARQMLKEANE) form a coiled coil. Positions 131–177 (ATVPGDKKVSKVKQTEKAPHVCSRGDRCGAHQPPPEKKSTPLKPVNQ) are disordered. The span at 135 to 169 (GDKKVSKVKQTEKAPHVCSRGDRCGAHQPPPEKKS) shows a compositional bias: basic and acidic residues. 309–316 (GPPGNGKT) is an ATP binding site.

It belongs to the AAA ATPase family. Spastin subfamily. Homohexamer. The homohexamer is stabilized by ATP-binding. The homohexamer may adopt a ring conformation through which microtubules pass prior to being severed. Interacts with microtubules.

The protein resides in the cytoplasm. It is found in the cytoskeleton. The protein localises to the perinuclear region. It catalyses the reaction n ATP + n H2O + a microtubule = n ADP + n phosphate + (n+1) alpha/beta tubulin heterodimers.. Severs microtubules, probably in an ATP-dependent fashion. This is Probable spastin homolog spas-1 (spas-1) from Caenorhabditis briggsae.